Reading from the N-terminus, the 220-residue chain is Glutathione S-transferase U26 (220 aa).

In terms of domain architecture, GST N-terminal spans 4-83 (DQVILLDYWP…YIDEVWSDAS (80 aa)). Glutathione contacts are provided by residues 14-15 (SM), 40-41 (VK), 54-55 (KI), and 67-68 (ES). The 122-residue stretch at 89 to 210 (DPYQKSRARF…ADSDRIIEYV (122 aa)) folds into the GST C-terminal domain.

It belongs to the GST superfamily. Tau family.

Its subcellular location is the cytoplasm. It localises to the cytosol. It carries out the reaction RX + glutathione = an S-substituted glutathione + a halide anion + H(+). Functionally, in vitro, possesses glutathione S-transferase activity toward 1-chloro-2,4-dinitrobenzene (CDNB). May be involved in the conjugation of reduced glutathione to a wide number of exogenous and endogenous hydrophobic electrophiles and have a detoxification role against certain herbicides. This is Glutathione S-transferase U26 (GSTU26) from Arabidopsis thaliana (Mouse-ear cress).